Here is a 278-residue protein sequence, read N- to C-terminus: Large ribosomal subunit protein uL2 (278 aa).

Positions 218 to 278 are disordered; the sequence is RPHNRGVVMN…IMRSRHQRKK (61 aa).

Belongs to the universal ribosomal protein uL2 family. Part of the 50S ribosomal subunit. Forms a bridge to the 30S subunit in the 70S ribosome.

Functionally, one of the primary rRNA binding proteins. Required for association of the 30S and 50S subunits to form the 70S ribosome, for tRNA binding and peptide bond formation. It has been suggested to have peptidyltransferase activity; this is somewhat controversial. Makes several contacts with the 16S rRNA in the 70S ribosome. The chain is Large ribosomal subunit protein uL2 from Rhizobium etli (strain ATCC 51251 / DSM 11541 / JCM 21823 / NBRC 15573 / CFN 42).